The primary structure comprises 206 residues: Large ribosomal subunit protein uL22m (206 aa).

Residues 1 to 40 (MAAAVLGQLGALWIHNLRSRGRLAWGVLPQSYVHTSASLD) constitute a mitochondrion transit peptide.

This sequence belongs to the universal ribosomal protein uL22 family. In terms of assembly, component of the mitochondrial ribosome large subunit (39S) which comprises a 16S rRNA and about 50 distinct proteins.

Its subcellular location is the mitochondrion. This is Large ribosomal subunit protein uL22m (MRPL22) from Pongo abelii (Sumatran orangutan).